The chain runs to 218 residues: Small ribosomal subunit protein uS3c (218 aa).

Residues isoleucine 47–alanine 118 form the KH type-2 domain.

This sequence belongs to the universal ribosomal protein uS3 family. In terms of assembly, part of the 30S ribosomal subunit.

Its subcellular location is the plastid. It localises to the chloroplast. The sequence is that of Small ribosomal subunit protein uS3c (rps3) from Cycas taitungensis (Prince sago).